Reading from the N-terminus, the 510-residue chain is NAD(P)H-quinone oxidoreductase subunit 2 A, chloroplastic (510 aa).

Transmembrane regions (helical) follow at residues 26–46, 57–77, 99–119, 124–144, 149–169, 183–203, 227–247, 295–315, 323–342, 354–374, 395–415, 418–438, and 484–504; these read LFDG…ILLL, IPWF…ALLF, IFQF…VEYI, MAIT…MFLC, LITI…LSGY, YLLM…WLYG, PGIS…LSPA, WHPL…LIAI, MLAY…IIVG, YMLF…LFGL, ALSL…AGFF, LHLF…IGLF, and MIVC…IIAI.

The protein belongs to the complex I subunit 2 family. NDH is composed of at least 16 different subunits, 5 of which are encoded in the nucleus.

It localises to the plastid. The protein localises to the chloroplast thylakoid membrane. It catalyses the reaction a plastoquinone + NADH + (n+1) H(+)(in) = a plastoquinol + NAD(+) + n H(+)(out). The catalysed reaction is a plastoquinone + NADPH + (n+1) H(+)(in) = a plastoquinol + NADP(+) + n H(+)(out). NDH shuttles electrons from NAD(P)H:plastoquinone, via FMN and iron-sulfur (Fe-S) centers, to quinones in the photosynthetic chain and possibly in a chloroplast respiratory chain. The immediate electron acceptor for the enzyme in this species is believed to be plastoquinone. Couples the redox reaction to proton translocation, and thus conserves the redox energy in a proton gradient. This Oenothera biennis (German evening primrose) protein is NAD(P)H-quinone oxidoreductase subunit 2 A, chloroplastic.